The sequence spans 374 residues: Queuine tRNA-ribosyltransferase (374 aa).

The Proton acceptor role is filled by Asp-89. Residues Asp-89–Phe-93, Asp-143, Gln-187, and Gly-214 each bind substrate. Residues Gly-245–Asp-251 form an RNA binding region. Asp-264 (nucleophile) is an active-site residue. An RNA binding; important for wobble base 34 recognition region spans residues Thr-269–Arg-273. Positions 302, 304, 307, and 333 each coordinate Zn(2+).

It belongs to the queuine tRNA-ribosyltransferase family. As to quaternary structure, homodimer. Within each dimer, one monomer is responsible for RNA recognition and catalysis, while the other monomer binds to the replacement base PreQ1. Zn(2+) serves as cofactor.

The catalysed reaction is 7-aminomethyl-7-carbaguanine + guanosine(34) in tRNA = 7-aminomethyl-7-carbaguanosine(34) in tRNA + guanine. It participates in tRNA modification; tRNA-queuosine biosynthesis. Catalyzes the base-exchange of a guanine (G) residue with the queuine precursor 7-aminomethyl-7-deazaguanine (PreQ1) at position 34 (anticodon wobble position) in tRNAs with GU(N) anticodons (tRNA-Asp, -Asn, -His and -Tyr). Catalysis occurs through a double-displacement mechanism. The nucleophile active site attacks the C1' of nucleotide 34 to detach the guanine base from the RNA, forming a covalent enzyme-RNA intermediate. The proton acceptor active site deprotonates the incoming PreQ1, allowing a nucleophilic attack on the C1' of the ribose to form the product. After dissociation, two additional enzymatic reactions on the tRNA convert PreQ1 to queuine (Q), resulting in the hypermodified nucleoside queuosine (7-(((4,5-cis-dihydroxy-2-cyclopenten-1-yl)amino)methyl)-7-deazaguanosine). The protein is Queuine tRNA-ribosyltransferase of Yersinia pseudotuberculosis serotype O:1b (strain IP 31758).